The sequence spans 184 residues: Regulatory protein RecX (184 aa).

The interval 1–21 is disordered; sequence MTLFPLPSTSDPAEADESTKR.

Belongs to the RecX family.

Its subcellular location is the cytoplasm. Its function is as follows. Modulates RecA activity. This Mycolicibacterium vanbaalenii (strain DSM 7251 / JCM 13017 / BCRC 16820 / KCTC 9966 / NRRL B-24157 / PYR-1) (Mycobacterium vanbaalenii) protein is Regulatory protein RecX.